The primary structure comprises 141 residues: MGNKESKYLEMCSEEAWLNIPNIFKCIFIRKLFYNKWLKYQEKNLEKRLKLLSFYHPKKDFMGIRDMLDMAPGGSYFITDNVTEEFLMLVVKHPEDGSAEFTKLCLKGGCIVIDGFYYDDLHIFITENPNLYKYPLIHYDR.

The protein belongs to the asfivirus MGF 100 family.

In terms of biological role, plays a role in virus cell tropism, and may be required for efficient virus replication in macrophages. The protein is Protein MGF 100-2L of African swine fever virus (isolate Pig/Kenya/KEN-50/1950) (ASFV).